The following is a 660-amino-acid chain: Pro-secreted protein ORF2 (660 aa).

Residues M1–G23 form the signal peptide. 2 disordered regions span residues A19–G43 and A64–V125. The Nuclear localization signal motif lies at R28–R33. The span at R93 to D124 shows a compositional bias: low complexity. N137 and N310 each carry an N-linked (GlcNAc...) asparagine; by host glycan. Residues I368–Q394 are particle formation. N562 is a glycosylation site (N-linked (GlcNAc...) asparagine; by host). The oligomerization stretch occupies residues T585–L610.

This sequence belongs to the hepevirus capsid protein family. As to quaternary structure, homodimer. In terms of assembly, self-assembles to form the capsid. The capsid is dominated by dimers that define the 30 morphological units. Interacts with phosphorylated protein ORF3. Interacts with host TMEM134. Interacts with host ASGR1 and ASGR2; these interactions facilitate infection of host hepatocytes. Cleaved by host protease in the N-terminus. In terms of processing, N-glycosylated. Post-translationally, not N-glycosylated. The C-terminus of the capsid protein ORF2 is truncated in non-enveloped virions shedded in feces, probably due to host proteases.

The protein resides in the secreted. It is found in the virion. Its subcellular location is the host cytoplasm. The protein localises to the host endoplasmic reticulum. It localises to the host Golgi apparatus. The protein resides in the host cell surface. It is found in the host nucleus. Functionally, plays a role in the inhibition of host antibody-mediated neutralization without blocking viral cell entry. Its function is as follows. Forms an icosahedral capsid with a T=1 symmetry and a 34 nm diameter. The capsid is composed of 60 copies linked to each other. Binds to the 5' end of the genomic RNA to mediate genome encapsidation. Binds to heparin surface proteoglycans (HSPGs) to mediate viral entry. Additionally, the interactions with host ASGR1 and ASGR2 facilitate viral infection of hepatocytes. Inhibits IFN production by blocking host TBK1-induced IRF3 phosphorylation. The nuclear form probably modulates host gene expression. The polypeptide is Pro-secreted protein ORF2 (Hepatitis E virus genotype 3 (isolate Human/United States/US2) (HEV-3)).